Reading from the N-terminus, the 166-residue chain is Regulator of ribonuclease activity A (166 aa).

Belongs to the RraA family. In terms of assembly, homotrimer. Binds to both RNA-binding sites in the C-terminal region of Rne and to RhlB.

Its subcellular location is the cytoplasm. Functionally, globally modulates RNA abundance by binding to RNase E (Rne) and regulating its endonucleolytic activity. Can modulate Rne action in a substrate-dependent manner by altering the composition of the degradosome. Modulates RNA-binding and helicase activities of the degradosome. This Mannheimia succiniciproducens (strain KCTC 0769BP / MBEL55E) protein is Regulator of ribonuclease activity A.